We begin with the raw amino-acid sequence, 77 residues long: Tachyplesin-2 (77 aa).

Positions 1-23 (MKKLVIALCLMMVLAVMVEEAEA) are cleaved as a signal peptide. Cystine bridges form between cysteine 26/cysteine 39 and cysteine 30/cysteine 35. At arginine 40 the chain carries Arginine amide. Residues 41–77 (GKRNEVRQYRDRGYDVRAIPDETFFTRQDEDEDDDEE) constitute a propeptide that is removed on maturation.

This sequence belongs to the tachyplesin/polyphemusin family. In terms of tissue distribution, hemocytes.

The protein resides in the secreted. Functionally, significantly inhibits the growth of Gram-negative and Gram-positive bacteria. This Tachypleus tridentatus (Japanese horseshoe crab) protein is Tachyplesin-2.